We begin with the raw amino-acid sequence, 103 residues long: Large ribosomal subunit protein bL21 (103 aa).

This sequence belongs to the bacterial ribosomal protein bL21 family. Part of the 50S ribosomal subunit. Contacts protein L20.

In terms of biological role, this protein binds to 23S rRNA in the presence of protein L20. The protein is Large ribosomal subunit protein bL21 of Pseudomonas paraeruginosa (strain DSM 24068 / PA7) (Pseudomonas aeruginosa (strain PA7)).